The chain runs to 63 residues: Large ribosomal subunit protein uL29 (63 aa).

The protein belongs to the universal ribosomal protein uL29 family.

This is Large ribosomal subunit protein uL29 from Flavobacterium psychrophilum (strain ATCC 49511 / DSM 21280 / CIP 103535 / JIP02/86).